The chain runs to 785 residues: Conserved oligomeric Golgi complex subunit 4 (785 aa).

The disordered stretch occupies residues 1–24; sequence MADLDSPPKLSGVQQPSEGVGGGR. N-acetylalanine is present on Ala-2. An interaction with SCFD1 region spans residues 2-84; that stretch reads ADLDSPPKLS…VTLHRMGPNL (83 aa). A Phosphoserine modification is found at Ser-6. Positions 85–153 are interaction with STX5; that stretch reads QLIEGDAKQL…TALRSEDYEQ (69 aa). Residues 618 to 740 are d domain; it reads PQVQPWINSF…SQMATILNLE (123 aa). The segment at 741 to 785 is e domain; essential for proper cell surface glycosylation; it reads RVTEILDYWGPNSGPLTWRLTPAEVRQVLALRIDFRSEDIKRLRL.

The protein belongs to the COG4 family. Monomer. Component of the conserved oligomeric Golgi (COG) complex which is composed of eight different subunits and is required for normal Golgi morphology and localization. Mediates interaction of SCFD1 with the COG complex. Interacts with STX5.

The protein localises to the cytoplasm. The protein resides in the cytosol. It is found in the golgi apparatus membrane. Functionally, required for normal Golgi function. Plays a role in SNARE-pin assembly and Golgi-to-ER retrograde transport via its interaction with SCFD1. The polypeptide is Conserved oligomeric Golgi complex subunit 4 (COG4) (Homo sapiens (Human)).